The following is a 138-amino-acid chain: Large ribosomal subunit protein uL16 (138 aa).

The protein belongs to the universal ribosomal protein uL16 family. Part of the 50S ribosomal subunit.

Functionally, binds 23S rRNA and is also seen to make contacts with the A and possibly P site tRNAs. This is Large ribosomal subunit protein uL16 from Anaeromyxobacter dehalogenans (strain 2CP-1 / ATCC BAA-258).